Consider the following 375-residue polypeptide: Cell division protein ZapE (375 aa).

78–85 (GGVGRGKT) serves as a coordination point for ATP.

Belongs to the AFG1 ATPase family. ZapE subfamily. As to quaternary structure, interacts with FtsZ.

Its subcellular location is the cytoplasm. Reduces the stability of FtsZ polymers in the presence of ATP. The sequence is that of Cell division protein ZapE from Escherichia coli O157:H7.